The primary structure comprises 258 residues: Phosphate import ATP-binding protein PstB (258 aa).

In terms of domain architecture, ABC transporter spans 12–253 (LEVKNLNFYY…PARKETEDYI (242 aa)). An ATP-binding site is contributed by 44–51 (GPSGCGKS).

Belongs to the ABC transporter superfamily. Phosphate importer (TC 3.A.1.7) family. In terms of assembly, the complex is composed of two ATP-binding proteins (PstB), two transmembrane proteins (PstC and PstA) and a solute-binding protein (PstS).

The protein localises to the cell inner membrane. It carries out the reaction phosphate(out) + ATP + H2O = ADP + 2 phosphate(in) + H(+). Part of the ABC transporter complex PstSACB involved in phosphate import. Responsible for energy coupling to the transport system. The sequence is that of Phosphate import ATP-binding protein PstB from Bordetella pertussis (strain Tohama I / ATCC BAA-589 / NCTC 13251).